We begin with the raw amino-acid sequence, 256 residues long: Nuclear shuttle protein (256 aa).

The short motif at 21–42 is the Bipartite nuclear localization signal element; sequence HSTGKRSRNVSRIDFKRRSSKY. Residues 81–96 carry the Nuclear localization signal motif; that stretch reads SLGKTEPSRSRSYIKL. Positions 150–187 are interaction with Arabidopsis thaliana NSI protein; it reads ELFGARIHSHGNLAVSSALKDRFYIRHVFKRVISVEKD.

It belongs to the begomovirus nuclear shuttle protein family. Binds to single-stranded and double-stranded viral DNA. Interacts with the host nuclear shuttle interacting (NSI) protein. This interaction may allow NSP to recruit NSI monomers to the viral genome and thus regulate nuclear export of viral genome by NSP.

The protein resides in the host nucleus. It localises to the host cytoplasm. It is found in the host cell membrane. In terms of biological role, binds to the genomic viral ssDNA, shuttles it into and out of the cell nucleus. Begomoviruses use 2 proteins to transport their DNA from cell to cell. The nuclear shuttle protein (NSP) shuttles it between nucleus and cytoplasm and the movement protein (MP) probably transports the DNA-NSP complex to the cell periphery and facilitates movement across the cell wall. This chain is Nuclear shuttle protein, found in Solanum lycopersicum (Tomato).